The sequence spans 548 residues: Protein swallow (548 aa).

Disordered stretches follow at residues 67-109, 184-206, and 358-428; these read AKTC…GRSS, NCQT…SSSF, and FSSV…ELIS. Residues 79 to 91 show a composition bias toward acidic residues; sequence QEDEDDYDEDVDG. Residues 189–205 are compositionally biased toward low complexity; the sequence is SNSDSNYNSNSNNSSSS. Ser-362 and Ser-368 each carry phosphoserine. A compositionally biased stretch (polar residues) spans 388 to 402; sequence APNNSETSQPSSNDS. A compositionally biased stretch (basic and acidic residues) spans 406 to 420; it reads VEAHEEERPSSRRQW. Phosphoserine is present on residues Ser-463, Ser-471, Ser-475, Ser-483, Ser-485, and Ser-487.

In terms of assembly, may be a homo- or heterodimer.

It localises to the nucleus. In terms of biological role, has a role in localizing bicoid mRNA at the anterior margin of the oocyte during oogenesis, and a poorly characterized role in nuclear divisions in early embryogenesis. In Drosophila melanogaster (Fruit fly), this protein is Protein swallow (swa).